Consider the following 184-residue polypeptide: GTP cyclohydrolase 1 (184 aa).

Positions 75, 78, and 146 each coordinate Zn(2+).

The protein belongs to the GTP cyclohydrolase I family. Homomer.

The enzyme catalyses GTP + H2O = 7,8-dihydroneopterin 3'-triphosphate + formate + H(+). The protein operates within cofactor biosynthesis; 7,8-dihydroneopterin triphosphate biosynthesis; 7,8-dihydroneopterin triphosphate from GTP: step 1/1. The chain is GTP cyclohydrolase 1 from Coxiella burnetii (strain Dugway 5J108-111).